The following is a 585-amino-acid chain: MRKTKIVCTIGPASESEEMIEKLINAGMNVARLNFSHGSHEEHKGRIDTIRKVAKRLDKIVAILLDTKGPEIRTHNMKDGIIELERGNEVIVSMNEVEGTPEKFSVTYENLINDVQVGSYILLDDGLIELQVKDIDHAKKEVKCDILNSGELKNKKGVNLPGVRVSLPGITEKDAEDIRFGIKENVDFIAASFVRRPSDVLEIREILEEQKANISVFPKIENQEGIDNIAEILEVSDGLMVARGDMGVEIPPEKVPMVQKDLIRQCNKLGKPVITATQMLDSMQRNPRATRAEASDVANAIYDGTDAVMLSGETAAGLYPEEAVKTMRNIAVSAEAAQDYKKLLSDRTKLVETSLVNAIGISVAHTALNLNVKAIVAATESGSTARTISKYRPHSDIIAVTPSEETARQCSIVWGVQPVVKKGRKSTDALLNNAVATAVETGRVSNGDLIIITAGVPTGETGTTNMMKIHLVGDEIANGQGIGRGSVVGTTLVAETVKDLEGKDLSDKVIVTNSIDETFVPYVEKALGLITEENGITSPSAIVGLEKGIPTVVGVEKAVKNISNNMLVTIDAAQGKIFEGYANVL.

Arg-32 provides a ligand contact to substrate. Residues Asn-34, Ser-36, Asp-66, and Thr-67 each coordinate K(+). 34 to 37 (NFSH) is a binding site for ATP. Residues Arg-73 and Lys-156 each contribute to the ATP site. Residue Glu-221 coordinates Mg(2+). Substrate-binding residues include Gly-244, Asp-245, and Thr-277. Position 245 (Asp-245) interacts with Mg(2+).

Belongs to the pyruvate kinase family. It in the C-terminal section; belongs to the PEP-utilizing enzyme family. Mg(2+) serves as cofactor. K(+) is required as a cofactor.

The catalysed reaction is pyruvate + ATP = phosphoenolpyruvate + ADP + H(+). The protein operates within carbohydrate degradation; glycolysis; pyruvate from D-glyceraldehyde 3-phosphate: step 5/5. This chain is Pyruvate kinase (pyk), found in Staphylococcus aureus (strain USA300).